Consider the following 117-residue polypeptide: Large ribosomal subunit protein bL20 (117 aa).

It belongs to the bacterial ribosomal protein bL20 family.

Functionally, binds directly to 23S ribosomal RNA and is necessary for the in vitro assembly process of the 50S ribosomal subunit. It is not involved in the protein synthesizing functions of that subunit. The polypeptide is Large ribosomal subunit protein bL20 (Mesomycoplasma hyopneumoniae (strain J / ATCC 25934 / NCTC 10110) (Mycoplasma hyopneumoniae)).